The following is a 93-amino-acid chain: Large ribosomal subunit protein bL31B (93 aa).

Belongs to the bacterial ribosomal protein bL31 family. Type B subfamily. In terms of assembly, part of the 50S ribosomal subunit.

The sequence is that of Large ribosomal subunit protein bL31B from Psychrobacter arcticus (strain DSM 17307 / VKM B-2377 / 273-4).